Here is a 157-residue protein sequence, read N- to C-terminus: Ribosome maturation factor RimP (157 aa).

The protein belongs to the RimP family.

It localises to the cytoplasm. Required for maturation of 30S ribosomal subunits. This is Ribosome maturation factor RimP from Streptococcus thermophilus (strain ATCC BAA-491 / LMD-9).